Consider the following 414-residue polypeptide: MTTQRSPGLFRRLAHGSLVKQILVGLVLGILLAWISKPAAEAVGLLGTLFVGALKAVAPILVLMLVMASIANHQHGQKTNILPILFLYLLGTFSAALAAVVFSFAFPSTLHLSSSAGDISPPSGIVEVMRGLVMSMVSNPIDALLKGNYIGILVWAIGLGFALRHGNETTKNLVNDMSNAVTFMVKLVIRFAPIGIFGLVSSTLATTGFSTLWGYAQLLVVLVGCMLLVALVVNPLLVWWKIRRNPFPLVLLCLRESGVYAFFTRSSAANIPVNMALCEKLNLDRDTYSVSIPLGATINMAGAAITITVLTLAAVNTLGIPVDLPTALLLSVVASLCACGASGVAGGSLLLIPLACNMFGISNDIAMQVVAVGFIIGVLQDSCETALNSSTDVLFTAAACQAEDDRLANSALRN.

Residues 2–15 (TTQRSPGLFRRLAH) are Cytoplasmic-facing. A helical transmembrane segment spans residues 16–36 (GSLVKQILVGLVLGILLAWIS). The Periplasmic segment spans residues 37–45 (KPAAEAVGL). Residues 46–66 (LGTLFVGALKAVAPILVLMLV) traverse the membrane as a helical segment. Residues 67-83 (MASIANHQHGQKTNILP) are Cytoplasmic-facing. Residues 84–104 (ILFLYLLGTFSAALAAVVFSF) form a helical membrane-spanning segment. Over 105–142 (AFPSTLHLSSSAGDISPPSGIVEVMRGLVMSMVSNPID) the chain is Periplasmic. The helical transmembrane segment at 143–163 (ALLKGNYIGILVWAIGLGFAL) threads the bilayer. At 164 to 179 (RHGNETTKNLVNDMSN) the chain is on the cytoplasmic side. Residues 180-200 (AVTFMVKLVIRFAPIGIFGLV) form a helical membrane-spanning segment. At 201-217 (SSTLATTGFSTLWGYAQ) the chain is on the periplasmic side. Residues 218-238 (LLVVLVGCMLLVALVVNPLLV) form a helical membrane-spanning segment. Residues 239 to 299 (WWKIRRNPFP…VSIPLGATIN (61 aa)) are Cytoplasmic-facing. The helical transmembrane segment at 300-320 (MAGAAITITVLTLAAVNTLGI) threads the bilayer. The Periplasmic portion of the chain corresponds to 321 to 331 (PVDLPTALLLS). Residues 332-352 (VVASLCACGASGVAGGSLLLI) traverse the membrane as a helical segment. Topologically, residues 353–414 (PLACNMFGIS…DRLANSALRN (62 aa)) are cytoplasmic.

It belongs to the dicarboxylate/amino acid:cation symporter (DAACS) (TC 2.A.23) family.

Its subcellular location is the cell inner membrane. It catalyses the reaction L-serine(in) + Na(+)(in) = L-serine(out) + Na(+)(out). It carries out the reaction L-threonine(in) + Na(+)(in) = L-threonine(out) + Na(+)(out). Its function is as follows. Involved in the import of serine and threonine into the cell, with the concomitant import of sodium (symport system). This chain is Serine/threonine transporter SstT, found in Shigella dysenteriae serotype 1 (strain Sd197).